The chain runs to 103 residues: Small integral membrane protein 32 (103 aa).

The helical transmembrane segment at 55–75 (YLLLFFLLLLSVALVVLFIGC) threads the bilayer.

The protein localises to the membrane. This Homo sapiens (Human) protein is Small integral membrane protein 32.